We begin with the raw amino-acid sequence, 57 residues long: Large ribosomal subunit protein bL32c (57 aa).

It belongs to the bacterial ribosomal protein bL32 family.

The protein resides in the plastid. It localises to the chloroplast. This Acorus calamus (Sweet flag) protein is Large ribosomal subunit protein bL32c.